The primary structure comprises 148 residues: Small ribosomal subunit protein uS15 (148 aa).

Residues 1–14 (MGRLHSHRHGKSHS) show a composition bias toward basic residues. Residues 1 to 27 (MGRLHSHRHGKSHSIRPSSPKAPSWIQ) are disordered.

This sequence belongs to the universal ribosomal protein uS15 family. As to quaternary structure, part of the 30S ribosomal subunit.

The polypeptide is Small ribosomal subunit protein uS15 (Cenarchaeum symbiosum (strain A)).